The primary structure comprises 233 residues: Zinc import ATP-binding protein ZnuC (233 aa).

One can recognise an ABC transporter domain in the interval 6–222 (IEFHNVSKKF…SDFSNALSSL (217 aa)). 38 to 45 (GPNGAGKT) is a binding site for ATP.

Belongs to the ABC transporter superfamily. Zinc importer (TC 3.A.1.15.5) family. As to quaternary structure, the complex is composed of two ATP-binding proteins (ZnuC), two transmembrane proteins (ZnuB) and a solute-binding protein (ZnuA).

The protein resides in the cell inner membrane. It catalyses the reaction Zn(2+)(out) + ATP(in) + H2O(in) = Zn(2+)(in) + ADP(in) + phosphate(in) + H(+)(in). Its function is as follows. Part of the ABC transporter complex ZnuABC involved in zinc import. Responsible for energy coupling to the transport system. This is Zinc import ATP-binding protein ZnuC from Rickettsia bellii (strain RML369-C).